A 114-amino-acid chain; its full sequence is UPF0342 protein LSL_0473 (114 aa).

This sequence belongs to the UPF0342 family.

This Ligilactobacillus salivarius (strain UCC118) (Lactobacillus salivarius) protein is UPF0342 protein LSL_0473.